The sequence spans 1047 residues: Probable phospholipid-transporting ATPase IIA (1047 aa).

Position 2 is an N-acetylthreonine (T2). At 2–69 (TDNIPLQPVR…NQKYNFFTFL (68 aa)) the chain is on the cytoplasmic side. Residues 70–91 (PGVLFNQFKYFFNLYFLLLACS) traverse the membrane as a helical segment. Residues 92-96 (QFVPE) are Extracellular-facing. Residues 97–119 (MRLGALYTYWVPLGFVLAVTVIR) form a helical membrane-spanning segment. At 120-303 (EAVEEIRCYV…GLFDLEVNCL (184 aa)) the chain is on the cytoplasmic side. The helical transmembrane segment at 304–325 (TKILFGALVVVSLVMVALQHFA) threads the bilayer. At 326–332 (GRWYLQI) the chain is on the extracellular side. The helical transmembrane segment at 333–354 (IRFLLLFSNIIPISLRVNLDMG) threads the bilayer. The Cytoplasmic portion of the chain corresponds to 355–841 (KIVYSWVIRR…GRNSYKRSAA (487 aa)). Catalysis depends on D391, which acts as the 4-aspartylphosphate intermediate. ATP-binding residues include D391, K392, T393, E502, F544, K549, K568, R597, T677, G678, D679, R759, and K765. Residue D391 coordinates Mg(2+). T393 serves as a coordination point for Mg(2+). D785 provides a ligand contact to Mg(2+). ATP contacts are provided by N788 and D789. D789 is a binding site for Mg(2+). A helical transmembrane segment spans residues 842–862 (LSQFVIHRSLCISTMQAVFSS). The Extracellular portion of the chain corresponds to 863–874 (VFYFASVPLYQG). A helical membrane pass occupies residues 875–893 (FLIIGYSTIYTMFPVFSLV). Topologically, residues 894 to 923 (LDKDVKSEVAMLYPELYKDLLKGRPLSYKT) are cytoplasmic. Residues 924-942 (FLIWVLISIYQGSTIMYGA) form a helical membrane-spanning segment. Residues 943 to 949 (LLLFESE) lie on the Extracellular side of the membrane. The chain crosses the membrane as a helical span at residues 950-972 (FVHIVAISFTSLILTELLMVALT). Topologically, residues 973 to 978 (IQTWHW) are cytoplasmic. The helical transmembrane segment at 979 to 999 (LMTVAELLSLACYIASLVFLH) threads the bilayer. The Extracellular portion of the chain corresponds to 1000 to 1006 (EFIDVYF). Residues 1007–1030 (IATLSFLWKVSVITLVSCLPLYVL) traverse the membrane as a helical segment. At 1031–1047 (KYLRRRFSPPSYSKLTS) the chain is on the cytoplasmic side.

The protein belongs to the cation transport ATPase (P-type) (TC 3.A.3) family. Type IV subfamily. In terms of assembly, heterotrimer with MON2 and DOP1B; this complex regulates SNX3-retromer mediated endosomal sorting of WLS. Interacts with RAB5A and RAB11A. The cofactor is Mg(2+).

Its subcellular location is the early endosome membrane. The protein resides in the recycling endosome membrane. It is found in the late endosome membrane. The protein localises to the golgi apparatus. It localises to the trans-Golgi network membrane. Its subcellular location is the cell membrane. The enzyme catalyses ATP + H2O + phospholipidSide 1 = ADP + phosphate + phospholipidSide 2.. Its function is as follows. Plays a role in regulating membrane trafficking of cargo proteins, namely endosome to plasma membrane recycling, probably acting through RAB5 and RAB11 activation. Also involved in endosome to trans-Golgi network retrograde transport. In complex with MON2 and DOP1B, regulates SNX3 retromer-mediated endosomal sorting of WLS, a transporter of Wnt morphogens in developing tissues. Participates in the formation of endosomal carriers that direct WLS trafficking back to Golgi, away from lysosomal degradation. Appears to be implicated in intercellular communication by negatively regulating the release of exosomes. The flippase activity towards membrane lipids and its role in membrane asymmetry remains to be proved. Required for the maintenance of neurite morphology and synaptic transmission. The polypeptide is Probable phospholipid-transporting ATPase IIA (Homo sapiens (Human)).